We begin with the raw amino-acid sequence, 395 residues long: Protein TAMALIN (395 aa).

The disordered stretch occupies residues 1-52 (MTLRRLRKLQQKEEAAATPDPAARTPDSEVAPAAPVPTPGPPAAAATPGPPA). Residues 16–33 (AATPDPAARTPDSEVAPA) show a composition bias toward low complexity. The residue at position 77 (T77) is a Phosphothreonine. Position 94 is a phosphoserine (S94). In terms of domain architecture, PDZ spans 101–190 (VLTLEKEDNQ…VLRLETLYGT (90 aa)). Positions 181–258 (VLRLETLYGT…GAGLLPGSLP (78 aa)) are interaction with PSCD3. Position 237 is a phosphotyrosine (Y237). Omega-N-methylarginine is present on R270. The disordered stretch occupies residues 293 to 349 (SEPPALPPPPPPARAFGPGPAETPAVGPGPGPRAALSRSASVRCAGPGGGGGGGAPG). Residues 296-305 (PALPPPPPPA) show a composition bias toward pro residues. A compositionally biased stretch (gly residues) spans 338-348 (GPGGGGGGGAP). S387 carries the phosphoserine modification.

Heteromer. Composed of TAMALIN, CYTH2 and at least one GRM1. Also interacts with CYTH3, GRM2, GRM3 and GRM5.

It is found in the cytoplasm. Its subcellular location is the perinuclear region. It localises to the cell membrane. The protein localises to the postsynaptic cell membrane. Plays a role in intracellular trafficking and contributes to the macromolecular organization of group 1 metabotropic glutamate receptors (mGluRs) at synapses. In Homo sapiens (Human), this protein is Protein TAMALIN.